The sequence spans 257 residues: UPF0246 protein CLH_2088 (257 aa).

The protein belongs to the UPF0246 family.

In Clostridium botulinum (strain Alaska E43 / Type E3), this protein is UPF0246 protein CLH_2088.